An 881-amino-acid polypeptide reads, in one-letter code: Rho GTPase-activating protein 17 (881 aa).

The 233-residue stretch at 14-246 folds into the BAR domain; it reads QTVGRAEKTE…MRAHQDKWAE (233 aa). The region spanning 252–442 is the Rho-GAP domain; the sequence is TPLEEHLKRS…PIIQHADWFF (191 aa). Residues 459-475 are compositionally biased toward polar residues; the sequence is TPSSNHSFHTGNDSDSG. The interval 459–482 is disordered; it reads TPSSNHSFHTGNDSDSGTLERKRP. Phosphoserine occurs at positions 484 and 575. The segment at 511–881 is disordered; sequence GGTLNRKHIS…IDNDTESTAL (371 aa). The span at 592 to 617 shows a compositional bias: polar residues; it reads RNNSQIASGQNQPQAAAGSHQLSMGQ. Pro residues predominate over residues 637–650; sequence APAPPKPGNPPPGH. Positions 653–664 are enriched in low complexity; the sequence is GQSSSGTSQHPP. Residues 665 to 678 are compositionally biased toward pro residues; the sequence is SLSPKPPTRSPSPP. Phosphothreonine occurs at positions 679 and 682. Residues 679–698 show a composition bias toward low complexity; sequence TQHTGQPPGQPSAPSQLSAP. Phosphoserine occurs at positions 702 and 704. Pro residues-rich tracts occupy residues 712–721, 752–764, and 806–816; these read NHPPPQPPTQ, HTPP…PSTP, and RPSVPPPPQPP. Phosphothreonine occurs at positions 753, 757, and 759. Residues 753-766 carry the SH3-binding motif; that stretch reads TPPQTPTPPSTPPL. S762 bears the Phosphoserine mark. A Phosphothreonine modification is found at T763. The span at 822 to 844 shows a compositional bias: polar residues; sequence GDSSLTNTAPTASKIVTDSNSRV. A compositionally biased stretch (basic and acidic residues) spans 845-865; the sequence is SEPHRSIFPEMHSDSASKDVP. Residues 872–881 are compositionally biased toward acidic residues; it reads IDNDTESTAL.

In terms of assembly, component of a complex whose core is composed of ARHGAP17, AMOT, PALS1, PATJ and PARD3/PAR3. Interacts with NHERF1, FNBP1, TRIP10, CAPZA (CAPZA1, CAPZA2 or CAPZA3), CAPZB, CD2AP and SH3KBP1/CIN85. In terms of tissue distribution, ubiquitously expressed. Expressed at higher level in heart and placenta.

It localises to the membrane. The protein localises to the cytoplasm. Its subcellular location is the cell junction. It is found in the tight junction. Functionally, rho GTPase-activating protein involved in the maintenance of tight junction by regulating the activity of CDC42, thereby playing a central role in apical polarity of epithelial cells. Specifically acts as a GTPase activator for the CDC42 GTPase by converting it to an inactive GDP-bound state. The complex formed with AMOT acts by regulating the uptake of polarity proteins at tight junctions, possibly by deciding whether tight junction transmembrane proteins are recycled back to the plasma membrane or sent elsewhere. Participates in the Ca(2+)-dependent regulation of exocytosis, possibly by catalyzing GTPase activity of Rho family proteins and by inducing the reorganization of the cortical actin filaments. Acts as a GTPase activator in vitro for RAC1. The chain is Rho GTPase-activating protein 17 (ARHGAP17) from Homo sapiens (Human).